We begin with the raw amino-acid sequence, 1393 residues long: Protein strawberry notch homolog 1 (1393 aa).

A disordered region spans residues 129 to 148 (STRPSVSAPTVRNAMTSAPS). Residue S148 is modified to Phosphoserine. At K149 the chain carries N6-acetyllysine. S162 and S214 each carry phosphoserine. N6-acetyllysine is present on K413. The segment at 687 to 840 (APSNNSSPRD…ANSNTNSNSS (154 aa)) is disordered. Phosphoserine is present on residues S692, S693, and S697. The segment covering 697 to 716 (SPCKENKIKKRKGEEITREA) has biased composition (basic and acidic residues). The segment covering 733–747 (SGSESDASDNEESDY) has biased composition (acidic residues). A phosphoserine mark is found at S754, S755, and S768. Residues 756 to 775 (GDDDDFNPFLDESNEDDEND) are compositionally biased toward acidic residues. A compositionally biased stretch (basic residues) spans 781 to 793 (KDHKKNKEKKKKK). S794 and S815 each carry phosphoserine. Low complexity predominate over residues 824–840 (PAPNSTPANSNTNSNSS). A coiled-coil region spans residues 843-870 (TSQDAVERAQQMKKDLLDKLEKLAEDLP). The residue at position 1222 (K1222) is an N6-acetyllysine. Residue S1386 is modified to Phosphoserine.

The protein belongs to the SBNO family.

It is found in the nucleus. Plays a crucial role in the regulation of neural stem cells (NSCs) proliferation. Enhances the phosphorylation of GSK3B through the PI3K-Akt signaling pathway, thereby upregulating the Wnt/beta-catenin signaling pathway and promoting the proliferation of NSCs. Improves ischemic stroke recovery while inhibiting neuroinflammation through small extracellular vesicles (sEVs)-mediated mechanism. Enhances the secretion of sEVs from NSCs, which in turn inhibit both the MAPK and NF-kappaB pathways in microglia. This inhibition suppresses the pro-inflammatory M1 polarization of microglia, promoting a shift towards the M2 anti-inflammatory phenotype, which is beneficial for reducing neuroinflammation. This is Protein strawberry notch homolog 1 (SBNO1) from Homo sapiens (Human).